The following is a 285-amino-acid chain: Methylamine utilization protein MauF (285 aa).

Helical transmembrane passes span 39–59 (LGGL…LSQT), 63–83 (GVAV…LSTW), 120–140 (AVGA…LGFG), 144–164 (FGAL…QLGF), 184–204 (FPVW…YLTY), 209–229 (ILYL…AILL), and 265–285 (ALLD…FAAL).

It is found in the cell membrane. It participates in one-carbon metabolism; methylamine degradation. The chain is Methylamine utilization protein MauF (mauF) from Methylorubrum extorquens (strain ATCC 14718 / DSM 1338 / JCM 2805 / NCIMB 9133 / AM1) (Methylobacterium extorquens).